Here is a 614-residue protein sequence, read N- to C-terminus: V-type proton ATPase catalytic subunit A (614 aa).

247 to 254 (GAFGCGKT) is an ATP binding site.

The protein belongs to the ATPase alpha/beta chains family. V-ATPase is a heteromultimeric enzyme made up of two complexes: the ATP-hydrolytic V1 complex and the proton translocation V0 complex. The V1 complex consists of three catalytic AB heterodimers that form a heterohexamer, three peripheral stalks each consisting of EG heterodimers, one central rotor including subunits D and F, and the regulatory subunits C and H. The proton translocation complex V0 consists of the proton transport subunit a, a ring of proteolipid subunits c9c'', rotary subunit d, subunits e and f, and the accessory subunits VhaAC45 and ATP6AP2.

It carries out the reaction ATP + H2O + 4 H(+)(in) = ADP + phosphate + 5 H(+)(out). With respect to regulation, ATP hydrolysis occurs at the interface between the nucleotide-binding domains of subunits A and B. ATP hydrolysis triggers a conformational change in the subunits D and F, which induces a shift of subunit d. The c-ring is subsequently rotated and results in a continuous proton translocation across the membrane. In terms of biological role, catalytic subunit of the V1 complex of vacuolar(H+)-ATPase (V-ATPase), a multisubunit enzyme composed of a peripheral complex (V1) that hydrolyzes ATP and a membrane integral complex (V0) that translocates protons. V-ATPase is responsible for acidifying and maintaining the pH of intracellular compartments and in some cell types, is targeted to the plasma membrane, where it is responsible for acidifying the extracellular environment. The protein is V-type proton ATPase catalytic subunit A (VhaA) of Aedes aegypti (Yellowfever mosquito).